We begin with the raw amino-acid sequence, 584 residues long: Galectin-3-binding protein (584 aa).

A signal peptide spans 1–18 (MTPPRLFWVWLLVAGTQG). Residues 24 to 124 (MRLADGGATN…HERDAGVVCT (101 aa)) enclose the SRCR domain. 3 cysteine pairs are disulfide-bonded: Cys49/Cys113, Cys62/Cys123, and Cys93/Cys103. Asn69 carries N-linked (GlcNAc...) asparagine glycosylation. 2 N-linked (GlcNAc...) asparagine glycosylation sites follow: Asn125 and Asn192. One can recognise a BTB domain in the interval 153-221 (CDLSISVNVQ…FYSRRIDITL (69 aa)). Positions 260 to 359 (PLDLYAYAVA…MLPEELFELQ (100 aa)) constitute a BACK domain. N-linked (GlcNAc...) asparagine glycans are attached at residues Asn361, Asn397, Asn550, and Asn579.

In terms of assembly, homodimers and homomultimers. The multimers form ring-like structures with a diameter of 30-40 nm. Binds LGALS1 and LGALS3. Binds ITGB1, COL4A1, COL5A1, COL6A1, FN1 and NID. Interacts with the gamma-tubulin ring complex (gamma-TuRC), composed of gamma-tubulin, TUBGCP2, TUBGCP3, TUBGCP4, TUBGCP5 and TUBGCP6. The unglycosylated form interacts with PDE4DIP; this interaction, which is PDE4DIP isoform-specific, may connect a pericentrosomal complex, made of AKAP9, CDK5RAP2, EB1/MAPRE1 and PDE4DIP, to the gamma-tubulin ring complex (gamma-TuRC) to promote microtubule assembly and acetylation.

It localises to the secreted. Its subcellular location is the extracellular space. It is found in the extracellular matrix. Promotes integrin-mediated cell adhesion. May stimulate host defense against viruses and tumor cells. The chain is Galectin-3-binding protein (LGALS3BP) from Pongo abelii (Sumatran orangutan).